A 623-amino-acid polypeptide reads, in one-letter code: Putative disease resistance protein At5g47280 (623 aa).

2 consecutive NB-ARC domains span residues L2–S51 and V119–V249. An ATP-binding site is contributed by G16–T23. 4 LRR repeats span residues S488–Q511, A512–L534, R536–V558, and T560–L581.

This sequence belongs to the disease resistance NB-LRR family.

Its function is as follows. Potential disease resistance protein. The sequence is that of Putative disease resistance protein At5g47280 from Arabidopsis thaliana (Mouse-ear cress).